Reading from the N-terminus, the 408-residue chain is G2/mitotic-specific cyclin-B (408 aa).

This sequence belongs to the cyclin family. Cyclin AB subfamily. Interacts with the CDC2 protein kinase to form a serine/threonine kinase holoenzyme complex also known as maturation promoting factor (MPF). The cyclin subunit imparts substrate specificity to the complex.

Functionally, essential for the control of the cell cycle at the G2/M (mitosis) transition. This Patella vulgata (Common limpet) protein is G2/mitotic-specific cyclin-B.